A 330-amino-acid chain; its full sequence is Phenylalanine--tRNA ligase alpha subunit (330 aa).

Position 246 (glutamate 246) interacts with Mg(2+).

The protein belongs to the class-II aminoacyl-tRNA synthetase family. Phe-tRNA synthetase alpha subunit type 1 subfamily. As to quaternary structure, tetramer of two alpha and two beta subunits. Mg(2+) is required as a cofactor.

It is found in the cytoplasm. It carries out the reaction tRNA(Phe) + L-phenylalanine + ATP = L-phenylalanyl-tRNA(Phe) + AMP + diphosphate + H(+). In Campylobacter jejuni subsp. jejuni serotype O:6 (strain 81116 / NCTC 11828), this protein is Phenylalanine--tRNA ligase alpha subunit.